We begin with the raw amino-acid sequence, 424 residues long: Lactate racemase (424 aa).

Residue 72 to 75 (DHTR) participates in Ni(II)-pyridinium-3,5-bisthiocarboxylate mononucleotide binding. Residues histidine 108 and histidine 174 each act as proton donor/acceptor in the active site. The Ni(II)-pyridinium-3,5-bisthiocarboxylate mononucleotide site is built by lysine 184 and histidine 200. Glutamine 295 and lysine 298 together coordinate substrate.

It belongs to the lactate racemase family. In terms of assembly, homodimer. Ni(II)-pyridinium-3,5-bisthiocarboxylate mononucleotide serves as cofactor.

The enzyme catalyses (S)-lactate = (R)-lactate. Activation of the apo-enzyme requires the three accessory proteins LarB, LarE and LarC, that are involved in the biosynthesis of the nickel-pincer cofactor of LarA. Inhibited by sulfite that behaves as a mixed inhibitor. Catalyzes the interconversion between the D- and L-isomers of lactate. May act as a rescue enzyme to ensure D-lactate production in physiological conditions where its production by the D-lactate dehydrogenase LdhD is not sufficient. D-Lactate is absolutely required for growth of L.plantarum and is an essential component of the cell wall peptidoglycan in this species, where it is incorporated as the last residue of the muramoyl-pentadepsipeptide peptidoglycan precursor; its incorporation confers high level of vancomycin resistance. This is Lactate racemase from Lactiplantibacillus plantarum (strain ATCC BAA-793 / NCIMB 8826 / WCFS1) (Lactobacillus plantarum).